The sequence spans 372 residues: Testis-specific serine/threonine-protein kinase 5 (372 aa).

In terms of domain architecture, Protein kinase spans 27-302 (LLSSKKIGSG…LQQVAAHCWM (276 aa)). ATP contacts are provided by residues 33–41 (IGSGAFSKV) and Lys-72. Catalysis depends on Asp-173, which acts as the Proton acceptor. Residues 314–372 (GAPREQDHSWSTVAPDNTEPDRDTRHARSKGSSSSSGRTSPRRPSLAQLCNTWKPAPEQ) are disordered. Residues 343-358 (KGSSSSSGRTSPRRPS) are compositionally biased toward low complexity.

It belongs to the protein kinase superfamily. CAMK Ser/Thr protein kinase family. Requires Mg(2+) as cofactor. In terms of processing, autophosphorylated.

It carries out the reaction L-seryl-[protein] + ATP = O-phospho-L-seryl-[protein] + ADP + H(+). The catalysed reaction is L-threonyl-[protein] + ATP = O-phospho-L-threonyl-[protein] + ADP + H(+). Activated by phosphorylation on Thr-207, potentially by autophosphorylation. May be involved in a signaling pathway during male germ cell development or mature sperm function. The protein is Testis-specific serine/threonine-protein kinase 5 of Mus musculus (Mouse).